The chain runs to 419 residues: Thymidine phosphorylase (419 aa).

The protein belongs to the thymidine/pyrimidine-nucleoside phosphorylase family. As to quaternary structure, homodimer.

The catalysed reaction is thymidine + phosphate = 2-deoxy-alpha-D-ribose 1-phosphate + thymine. Its function is as follows. The enzymes which catalyze the reversible phosphorolysis of pyrimidine nucleosides are involved in the degradation of these compounds and in their utilization as carbon and energy sources, or in the rescue of pyrimidine bases for nucleotide synthesis. The chain is Thymidine phosphorylase (deoA) from Mycoplasmoides pirum (Mycoplasma pirum).